Here is a 37-residue protein sequence, read N- to C-terminus: Large ribosomal subunit protein bL36 (37 aa).

Belongs to the bacterial ribosomal protein bL36 family.

The protein is Large ribosomal subunit protein bL36 of Bifidobacterium adolescentis (strain ATCC 15703 / DSM 20083 / NCTC 11814 / E194a).